Consider the following 103-residue polypeptide: Large ribosomal subunit protein uL24 (103 aa).

Positions 70–103 (YLDPSTNEPTRLGVRREDGKRVRYAKKSGKDLEN) are disordered.

The protein belongs to the universal ribosomal protein uL24 family. In terms of assembly, part of the 50S ribosomal subunit.

Its function is as follows. One of two assembly initiator proteins, it binds directly to the 5'-end of the 23S rRNA, where it nucleates assembly of the 50S subunit. Functionally, one of the proteins that surrounds the polypeptide exit tunnel on the outside of the subunit. In Lactiplantibacillus plantarum (strain ATCC BAA-793 / NCIMB 8826 / WCFS1) (Lactobacillus plantarum), this protein is Large ribosomal subunit protein uL24.